The sequence spans 446 residues: 5-hydroxytryptamine receptor 7 (446 aa).

The Extracellular segment spans residues 1–84 (MMGVNSSGRP…INYGRAEKVV (84 aa)). N-linked (GlcNAc...) asparagine glycosylation is found at Asn5 and Asn67. The helical transmembrane segment at 85–109 (IGSILTLITLLTIAGNCLVVISVCF) threads the bilayer. At 110–119 (VKKLRQPSNY) the chain is on the cytoplasmic side. A helical transmembrane segment spans residues 120–141 (LIVSLALADLSVAVAVIPFVSV). Residues 142-153 (TDLIGGKWIFGH) lie on the Extracellular side of the membrane. Residues 154–179 (FFCNVFIAMDVMCCTASIMTLCVISI) traverse the membrane as a helical segment. A disulfide bridge links Cys156 with Cys232. Residue Asp163 coordinates serotonin. Residues 180-199 (DRYLGITRPLTYPVRQNGKC) lie on the Cytoplasmic side of the membrane. A helical membrane pass occupies residues 200–220 (MPKMILSVWLLSASITLPPLF). At 221–238 (GWAQNVNDDKVCLISQDF) the chain is on the extracellular side. A helical transmembrane segment spans residues 239–261 (GYTIYSTAVAFYIPMSVMLFMYY). Residues 262-327 (RIYKAARKSA…SIFKREQKAA (66 aa)) lie on the Cytoplasmic side of the membrane. Residues 328–353 (TTLGIIVGAFTVCWLPFFLLSTARPF) form a helical membrane-spanning segment. At 354–364 (ICGTACSCIPL) the chain is on the extracellular side. A helical membrane pass occupies residues 365–388 (WVERTCLWLGYANSLINPFIYAFF). The Cytoplasmic portion of the chain corresponds to 389-446 (NRDLRTTYRSLLQCQYRNINRKLSAAGMHEALKLAERPERPECVLQNSDYCRKKGHDS). Cys402 is lipidated: S-palmitoyl cysteine.

This sequence belongs to the G-protein coupled receptor 1 family.

It localises to the cell membrane. Its function is as follows. G-protein coupled receptor for 5-hydroxytryptamine (serotonin), a biogenic hormone that functions as a neurotransmitter, a hormone and a mitogen. Ligand binding causes a conformation change that triggers signaling via guanine nucleotide-binding proteins (G proteins) and modulates the activity of downstream effectors. HTR7 is coupled to G(s) G alpha proteins and mediates activation of adenylate cyclase activity. This chain is 5-hydroxytryptamine receptor 7 (HTR7), found in Cavia porcellus (Guinea pig).